Consider the following 407-residue polypeptide: Large ribosomal subunit protein uL3-like (407 aa).

Basic residues predominate over residues Met-1–Ser-31. The segment at Met-1–Pro-37 is disordered.

This sequence belongs to the universal ribosomal protein uL3 family. In terms of assembly, component of the large ribosomal subunit (LSU). Part of a LSU subcomplex, the 5S RNP which is composed of the 5S RNA, RPL5 and RPL11. Interacts with NVL in an ATP-dependent manner. Interacts with RRP1B. Interacts with IPO5, IPO7 and KPNB1; these interactions may be involved in RPL5 nuclear import for the assembly of ribosomal subunits. Interacts with RRP1B. Expression is restricted to striated muscles.

Functionally, heart- and skeletal muscle-specific component of the ribosome, which regulates muscle function. Component of the large ribosomal subunit in striated muscle cells: replaces the RPL3 paralog in the ribosome in these cells. The ribosome is a large ribonucleoprotein complex responsible for the synthesis of proteins in the cell. Inhibits myotube growth and muscle function. The polypeptide is Large ribosomal subunit protein uL3-like (Mus musculus (Mouse)).